Here is a 305-residue protein sequence, read N- to C-terminus: Ribonuclease BN (305 aa).

7 residues coordinate Zn(2+): H64, H66, D68, H69, H141, D212, and H270. D68 (proton acceptor) is an active-site residue.

It belongs to the RNase Z family. RNase BN subfamily. As to quaternary structure, homodimer. Zn(2+) serves as cofactor.

In terms of biological role, zinc phosphodiesterase, which has both exoribonuclease and endoribonuclease activities. The sequence is that of Ribonuclease BN from Escherichia coli O81 (strain ED1a).